The following is a 95-amino-acid chain: Small integral membrane protein 18 (95 aa).

The helical transmembrane segment at 35–55 (CFVILLLFIFTVVSLVVLAFL) threads the bilayer.

The protein resides in the membrane. The chain is Small integral membrane protein 18 (SMIM18) from Homo sapiens (Human).